The following is a 200-amino-acid chain: Kunitz type trypsin inhibitor 111 (200 aa).

The signal sequence occupies residues 1-24 (MSTISFTIFILANVWLLVVTTSIA). 3 disulfide bridges follow: C62–C108, C160–C172, and C165–C168.

This sequence belongs to the protease inhibitor I3 (leguminous Kunitz-type inhibitor) family. In terms of assembly, interacts with SCP1.

The protein localises to the secreted. Its subcellular location is the extracellular space. It is found in the apoplast. The protein is Kunitz type trypsin inhibitor 111 (KPI111) of Medicago truncatula (Barrel medic).